Consider the following 142-residue polypeptide: Arginine decarboxylase proenzyme (142 aa).

Serine 81 serves as the catalytic Schiff-base intermediate with substrate; via pyruvic acid. Pyruvic acid (Ser); by autocatalysis is present on serine 81. Histidine 86 functions as the Proton acceptor; for processing activity in the catalytic mechanism. The Proton donor; for catalytic activity role is filled by cysteine 101.

This sequence belongs to the prokaryotic AdoMetDC family. Type 1 subfamily. As to quaternary structure, heterooctamer of four alpha and four beta chains arranged as a tetramer of alpha/beta heterodimers. Pyruvate is required as a cofactor. In terms of processing, is synthesized initially as an inactive proenzyme. Formation of the active enzyme involves a self-maturation process in which the active site pyruvoyl group is generated from an internal serine residue via an autocatalytic post-translational modification. Two non-identical subunits are generated from the proenzyme in this reaction, and the pyruvate is formed at the N-terminus of the alpha chain, which is derived from the carboxyl end of the proenzyme. The post-translation cleavage follows an unusual pathway, termed non-hydrolytic serinolysis, in which the side chain hydroxyl group of the serine supplies its oxygen atom to form the C-terminus of the beta chain, while the remainder of the serine residue undergoes an oxidative deamination to produce ammonia and the pyruvoyl group blocking the N-terminus of the alpha chain.

It carries out the reaction L-arginine + H(+) = agmatine + CO2. It functions in the pathway amine and polyamine biosynthesis; agmatine biosynthesis; agmatine from L-arginine: step 1/1. Functionally, specifically catalyzes the decarboxylation of L-arginine to agmatine. Has no S-adenosylmethionine decarboxylase (AdoMetDC) activity. The chain is Arginine decarboxylase proenzyme from Hyperthermus butylicus (strain DSM 5456 / JCM 9403 / PLM1-5).